The chain runs to 1886 residues: Nuclear pore membrane glycoprotein 210 (1886 aa).

Positions 1 to 25 are cleaved as a signal peptide; that stretch reads MARASLIQPGLWALLLLQAVGPAVA. Residues 26-1805 lie on the Perinuclear space side of the membrane; that stretch reads AKLNIPKVLL…GASLLSHFLD (1780 aa). N-linked (GlcNAc...) asparagine glycosylation is found at Asn-337, Asn-484, Asn-681, and Asn-1039. Positions 1078-1151 constitute a BIG2 domain; sequence FPPFRLIPRK…VQAVDAETGK (74 aa). Residues 1806–1828 form a helical membrane-spanning segment; sequence SYQVMFFTFFALLAGTAVTIIAY. The Cytoplasmic portion of the chain corresponds to 1829 to 1886; sequence HTVCAPRELASPLALTPHASPQHSPHYLASSPTAFNTLPSDRKASPPSGLWSPAYASH. Ser-1839 carries the post-translational modification Phosphoserine. The residue at position 1844 (Thr-1844) is a Phosphothreonine. The interval 1866-1886 is disordered; that stretch reads LPSDRKASPPSGLWSPAYASH. Ser-1873, Ser-1876, Ser-1880, and Ser-1885 each carry phosphoserine.

This sequence belongs to the NUP210 family. As to quaternary structure, forms dimers and possibly higher-order oligomers. Post-translationally, N-glycosylated, but not all potential glycosylation sites may be used. Contains high-mannose type oligosaccharides. Phosphorylated at Ser-1880 in mitosis specifically; not phosphorylated in interphase.

The protein localises to the nucleus. It localises to the nuclear pore complex. Its subcellular location is the nucleus membrane. The protein resides in the endoplasmic reticulum membrane. Functionally, nucleoporin essential for nuclear pore assembly and fusion, nuclear pore spacing, as well as structural integrity. This chain is Nuclear pore membrane glycoprotein 210 (Nup210), found in Rattus norvegicus (Rat).